Reading from the N-terminus, the 154-residue chain is Small ribosomal subunit protein uS15 (154 aa).

A compositionally biased stretch (basic residues) spans 1-14 (MAPVPHRSRHKKGR). The interval 1–24 (MAPVPHRSRHKKGRSGSVRPAHPT) is disordered.

This sequence belongs to the universal ribosomal protein uS15 family. Part of the 30S ribosomal subunit.

In Pyrobaculum arsenaticum (strain DSM 13514 / JCM 11321 / PZ6), this protein is Small ribosomal subunit protein uS15.